The primary structure comprises 642 residues: Threonine--tRNA ligase (642 aa).

The 61-residue stretch at Met1 to Thr61 folds into the TGS domain. The interval Asp243–Pro534 is catalytic. Zn(2+) contacts are provided by Cys334, His385, and His511.

It belongs to the class-II aminoacyl-tRNA synthetase family. In terms of assembly, homodimer. Requires Zn(2+) as cofactor.

The protein resides in the cytoplasm. The enzyme catalyses tRNA(Thr) + L-threonine + ATP = L-threonyl-tRNA(Thr) + AMP + diphosphate + H(+). Functionally, catalyzes the attachment of threonine to tRNA(Thr) in a two-step reaction: L-threonine is first activated by ATP to form Thr-AMP and then transferred to the acceptor end of tRNA(Thr). Also edits incorrectly charged L-seryl-tRNA(Thr). In Baumannia cicadellinicola subsp. Homalodisca coagulata, this protein is Threonine--tRNA ligase.